We begin with the raw amino-acid sequence, 372 residues long: GDP-mannose 4,6-dehydratase (372 aa).

Residues 8-13, 63-64, 85-89, and Y100 each bind NADP(+); these read GITGQD, DL, and LGAQS. The active site involves T132. Catalysis depends on nucleophile residues E134 and Y156. Residues K160, H186, and R191 each coordinate NADP(+).

Belongs to the NAD(P)-dependent epimerase/dehydratase family. GDP-mannose 4,6-dehydratase subfamily. The cofactor is NADP(+).

It catalyses the reaction GDP-alpha-D-mannose = GDP-4-dehydro-alpha-D-rhamnose + H2O. It participates in bacterial outer membrane biogenesis; LPS O-antigen biosynthesis. Its pathway is nucleotide-sugar biosynthesis; GDP-L-fucose biosynthesis via de novo pathway; GDP-L-fucose from GDP-alpha-D-mannose: step 1/2. In terms of biological role, catalyzes the conversion of GDP-D-mannose to GDP-4-dehydro-6-deoxy-D-mannose. The polypeptide is GDP-mannose 4,6-dehydratase (Yersinia enterocolitica serotype O:8 / biotype 1B (strain NCTC 13174 / 8081)).